The sequence spans 177 residues: FMRFamide-like neuropeptides 7 (177 aa).

The N-terminal stretch at methionine 1–alanine 19 is a signal peptide. Positions glutamate 20–glutamine 49 are excised as a propeptide. The interval glutamine 25–arginine 106 is disordered. Phenylalanine amide is present on residues phenylalanine 62, phenylalanine 75, phenylalanine 89, phenylalanine 103, phenylalanine 117, and phenylalanine 130. Leucine 143 carries the post-translational modification Leucine amide. Phenylalanine 157 carries the post-translational modification Phenylalanine amide. Positions serine 161–glutamate 177 are excised as a propeptide.

This sequence belongs to the FARP (FMRFamide related peptide) family. In terms of tissue distribution, expressed in the ASI sensory neurons, the ALA interneuron and the AVG interneuron from where secretion occurs. Expression in the ASI neurons is necessary and sufficient to maintain serotonin-induced fat loss.

The protein resides in the secreted. In terms of biological role, FMRFamide-like neuropeptides. Stimulates serotonin-induced fat loss by binding to and activating the npr-22 receptor which leads to induction of the atgl-1 lipase and subsequent fat loss. Together with atfs-1, negatively regulates the expression of the transcription regulator hlh-11, to promote expression of atgl-1, and thus atgl-1-dependent fat oxidation in response to mitochondrial stress. TPMQRSSMVRF-amide: Acts as a ligand for the npr-22 receptor in vitro. Functionally, SPMQRSSMVRF-amide: Acts as a ligand for the npr-22 receptor in vitro. Its function is as follows. Acts as a ligand for the npr-22 receptor in vitro. This Caenorhabditis elegans protein is FMRFamide-like neuropeptides 7.